Reading from the N-terminus, the 307-residue chain is Cyclin-dependent kinase 5 activator 1 (307 aa).

Glycine 2 carries the N-myristoyl glycine lipid modification. Residue serine 8 is modified to Phosphoserine; by CDK5. The segment at 97-133 (TFAQPPPAQPPAPPASQLSGSQTGVSSSVKKAPHPAI) is disordered. Over residues 100 to 110 (QPPPAQPPAPP) the composition is skewed to pro residues. Residues 112 to 125 (SQLSGSQTGVSSSV) are compositionally biased toward polar residues. The residue at position 138 (threonine 138) is a Phosphothreonine; by CDK5.

Belongs to the cyclin-dependent kinase 5 activator family. As to quaternary structure, heterodimer composed of a catalytic subunit CDK5 and a regulatory subunit CDK5R1 (p25) and macromolecular complex composed of at least CDK5, CDK5R1 (p35) and CDK5RAP1 or CDK5RAP2 or CDK5RAP3. Only the heterodimer shows kinase activity. Interacts with EPHA4 and NGEF; may mediate the activation of NGEF by EPHA4. Interacts with RASGRF2. The complex p35/CDK5 interacts with CLOCK. In terms of processing, the p35 form is proteolytically cleaved by calpain, giving rise to the p25 form. P35 has a 5 to 10 fold shorter half-life compared to p25. The conversion results in deregulation of the CDK5 kinase: p25/CDK5 kinase displays an increased and altered tau phosphorylation in comparison to the p35/CDK5 kinase in vivo. Myristoylated. A proper myristoylation signal is essential for the proper distribution of p35. Post-translationally, phosphorylation at Ser-8 and Thr-138 by CDK5 prevents calpain-mediated proteolysis. In terms of processing, ubiquitinated, leading to its degradation: degradation of p35 by proteasome results in down-regulation of CDK5 activity. During this process, CDK5 phosphorylates p35 and induces its ubiquitination and subsequent degradation. Ubiquitinated by the CRL2(FEM1B) complex, which recognizes the -Gly-Leu-Asp-Arg C-degron at the C-terminus, leading to its degradation. Brain and neuron specific.

The protein localises to the cell membrane. The protein resides in the cell projection. It is found in the neuron projection. It localises to the nucleus. Its subcellular location is the cytoplasm. The protein localises to the perinuclear region. The protein resides in the perikaryon. Its function is as follows. p35 is a neuron specific activator of CDK5. The complex p35/CDK5 is required for neurite outgrowth and cortical lamination. Involved in dendritic spine morphogenesis by mediating the EFNA1-EPHA4 signaling. Activator of TPKII. The complex p35/CDK5 participates in the regulation of the circadian clock by modulating the function of CLOCK protein: phosphorylates CLOCK at 'Thr-451' and 'Thr-461' and regulates the transcriptional activity of the CLOCK-BMAL1 heterodimer in association with altered stability and subcellular distribution. This Rattus norvegicus (Rat) protein is Cyclin-dependent kinase 5 activator 1 (Cdk5r1).